The primary structure comprises 418 residues: Tryptophan synthase beta chain (418 aa).

Residues Met-1–Pro-18 show a composition bias toward polar residues. Residues Met-1–Phe-28 are disordered. Lys-111 carries the post-translational modification N6-(pyridoxal phosphate)lysine.

It belongs to the TrpB family. Tetramer of two alpha and two beta chains. The cofactor is pyridoxal 5'-phosphate.

The enzyme catalyses (1S,2R)-1-C-(indol-3-yl)glycerol 3-phosphate + L-serine = D-glyceraldehyde 3-phosphate + L-tryptophan + H2O. It functions in the pathway amino-acid biosynthesis; L-tryptophan biosynthesis; L-tryptophan from chorismate: step 5/5. Functionally, the beta subunit is responsible for the synthesis of L-tryptophan from indole and L-serine. The chain is Tryptophan synthase beta chain from Synechococcus sp. (strain CC9902).